The following is a 172-amino-acid chain: UPF0102 protein AM1_3954 (172 aa).

It belongs to the UPF0102 family.

The sequence is that of UPF0102 protein AM1_3954 from Acaryochloris marina (strain MBIC 11017).